A 141-amino-acid chain; its full sequence is Large ribosomal subunit protein uL11 (141 aa).

It belongs to the universal ribosomal protein uL11 family. Part of the ribosomal stalk of the 50S ribosomal subunit. Interacts with L10 and the large rRNA to form the base of the stalk. L10 forms an elongated spine to which L12 dimers bind in a sequential fashion forming a multimeric L10(L12)X complex. In terms of processing, one or more lysine residues are methylated.

Its function is as follows. Forms part of the ribosomal stalk which helps the ribosome interact with GTP-bound translation factors. The chain is Large ribosomal subunit protein uL11 from Chlorobaculum tepidum (strain ATCC 49652 / DSM 12025 / NBRC 103806 / TLS) (Chlorobium tepidum).